The following is a 609-amino-acid chain: Tyrosine-protein kinase transforming protein Fes (609 aa).

Disordered stretches follow at residues Ala-1–His-20 and Arg-152–Thr-208. Residues Met-8–Lys-174 enclose the F-BAR; degenerate domain. 2 stretches are compositionally biased toward basic and acidic residues: residues Lys-160–Leu-175 and Gln-190–Gly-206. Residues Trp-247–Val-336 enclose the SH2 domain. Residues Leu-348 to Arg-609 enclose the Protein kinase domain. ATP is bound by residues Ile-354–Val-362 and Lys-377. The Proton acceptor role is filled by Asp-470. A Phosphotyrosine; by autocatalysis modification is found at Tyr-500.

It belongs to the protein kinase superfamily. Tyr protein kinase family. Fes/fps subfamily.

It carries out the reaction L-tyrosyl-[protein] + ATP = O-phospho-L-tyrosyl-[protein] + ADP + H(+). The chain is Tyrosine-protein kinase transforming protein Fes (V-FES) from Felidae (cat family).